Consider the following 279-residue polypeptide: Large ribosomal subunit protein uL2 (279 aa).

The disordered stretch occupies residues 224–279 (AMNAVDHPMGGGRGHSKGGNIPRSPWNQPSRGLKTRPKKSWDWMIVSDRRKNKAGK).

This sequence belongs to the universal ribosomal protein uL2 family. In terms of assembly, part of the 50S ribosomal subunit. Forms a bridge to the 30S subunit in the 70S ribosome.

Its function is as follows. One of the primary rRNA binding proteins. Required for association of the 30S and 50S subunits to form the 70S ribosome, for tRNA binding and peptide bond formation. It has been suggested to have peptidyltransferase activity; this is somewhat controversial. Makes several contacts with the 16S rRNA in the 70S ribosome. This Elusimicrobium minutum (strain Pei191) protein is Large ribosomal subunit protein uL2.